Here is a 263-residue protein sequence, read N- to C-terminus: Methylesterase 1 (263 aa).

Serine 85 serves as the catalytic Acyl-ester intermediate. Residues aspartate 213 and histidine 241 each act as charge relay system in the active site.

The protein belongs to the AB hydrolase superfamily. Methylesterase family.

It carries out the reaction methyl (indol-3-yl)acetate + H2O = (indol-3-yl)acetate + methanol + H(+). The catalysed reaction is methyl (-)-jasmonate + H2O = jasmonate + methanol + H(+). The enzyme catalyses methyl salicylate + H2O = salicylate + methanol + H(+). It participates in plant hormone biosynthesis. Its pathway is lipid metabolism; oxylipin biosynthesis. Its activity is regulated as follows. Esterase activity is down-regulated by salicylic acid (SA). Methylesterase shown to have carboxylesterase activity, methyl indole-3-acetic acid (MeIAA) esterase activity, methyl salicylate (MeSA) esterase activity and methyl jasmonate (MeJA) esterase activity in vitro. Required to convert methyl salicylate (MeSA) to salicylic acid (SA) as part of the signal transduction pathways that activate systemic acquired resistance in systemic tissue. MeSA is believed to be an inactive form that needs to be demethylated to exert a biological effect. This chain is Methylesterase 1, found in Arabidopsis thaliana (Mouse-ear cress).